A 450-amino-acid polypeptide reads, in one-letter code: MRKTLTSIRFLSDGIRVKDKWNSLISDLVVEPTNSTGPLSGTTYIVKDNIATSHGYTTAASKILSNYESPFNATIIDLLSSNGSKLIGKSNLDEFGMGSANYNSYFNKVTNPYDNTKVPGGSSGGSAASVAGKMCSFSIGTDTGGSVRLPASYCNVFGFKPTYGRISRWGVIPYAQTLDTVGIIGENVNIIKRVYDVLNKYDDKDPTCLPEEVRQKIPTTKKETLTIGVPHEFVLKELSADVRESWEYALSKTCKLGHLVKPISIKTIKKALPSYYTLATAEAASNLSRYDGIRYGYNTNELVNSPIELIATNRSDGFGSEVQRRILLGNYTLSSDSGDHYLRATQIREELCAEFSSIFNNSHVLLQDEQSSDKVDLIMAPTSTSTAPTWDEFVSANEKNFLNSYVNDVLTVPASLAGIPAISVPVNGIGIQLMGQFGDDDLVLQLADQI.

Catalysis depends on charge relay system residues Lys-47 and Ser-122. The Acyl-ester intermediate role is filled by Ser-146.

It belongs to the amidase family. GatA subfamily. In terms of assembly, subunit of the heterotrimeric GatFAB amidotransferase (AdT) complex, composed of A, B and F subunits.

Its subcellular location is the mitochondrion. The catalysed reaction is L-glutamyl-tRNA(Gln) + L-glutamine + ATP + H2O = L-glutaminyl-tRNA(Gln) + L-glutamate + ADP + phosphate + H(+). In terms of biological role, allows the formation of correctly charged Gln-tRNA(Gln) through the transamidation of misacylated Glu-tRNA(Gln) in the mitochondria. The reaction takes place in the presence of glutamine and ATP through an activated gamma-phospho-Glu-tRNA(Gln). The sequence is that of Glutamyl-tRNA(Gln) amidotransferase subunit A, mitochondrial from Candida albicans (strain SC5314 / ATCC MYA-2876) (Yeast).